A 114-amino-acid chain; its full sequence is uncharacterized protein (114 aa).

Basic residues predominate over residues 18-29 (TRKRNSHKKVTK). Disordered regions lie at residues 18 to 47 (TRKR…RRTG) and 65 to 108 (SRPR…KLLN). Residues 30-41 (RAVEKRKQDSTR) are compositionally biased toward basic and acidic residues.

This is an uncharacterized protein from Homo sapiens (Human).